Consider the following 321-residue polypeptide: Glucokinase (321 aa).

8–13 serves as a coordination point for ATP; it reads GDVGGT.

It belongs to the bacterial glucokinase family.

The protein resides in the cytoplasm. The catalysed reaction is D-glucose + ATP = D-glucose 6-phosphate + ADP + H(+). The chain is Glucokinase from Cronobacter sakazakii (strain ATCC BAA-894) (Enterobacter sakazakii).